Here is a 408-residue protein sequence, read N- to C-terminus: tRNA-specific 2-thiouridylase MnmA (408 aa).

Residues 38-45 (GMSGGVDS) and M64 each bind ATP. Residues 124-126 (NPD) form an interaction with target base in tRNA region. Catalysis depends on C129, which acts as the Nucleophile. C129 and C231 form a disulfide bridge. G153 contributes to the ATP binding site. Residues 181–183 (KDQ) form an interaction with tRNA region. C231 functions as the Cysteine persulfide intermediate in the catalytic mechanism. The segment at 348–349 (RY) is interaction with tRNA.

Belongs to the MnmA/TRMU family.

Its subcellular location is the cytoplasm. The enzyme catalyses S-sulfanyl-L-cysteinyl-[protein] + uridine(34) in tRNA + AH2 + ATP = 2-thiouridine(34) in tRNA + L-cysteinyl-[protein] + A + AMP + diphosphate + H(+). Functionally, catalyzes the 2-thiolation of uridine at the wobble position (U34) of tRNA, leading to the formation of s(2)U34. The sequence is that of tRNA-specific 2-thiouridylase MnmA from Psychrobacter arcticus (strain DSM 17307 / VKM B-2377 / 273-4).